Here is a 90-residue protein sequence, read N- to C-terminus: uncharacterized protein (90 aa).

Its subcellular location is the cytoplasm. This is an uncharacterized protein from Saccharomyces cerevisiae (strain ATCC 204508 / S288c) (Baker's yeast).